Here is a 468-residue protein sequence, read N- to C-terminus: Serine--tRNA ligase (468 aa).

272 to 274 is a binding site for L-serine; it reads TAE. Position 303–305 (303–305) interacts with ATP; that stretch reads RAE. E326 contributes to the L-serine binding site. 390–393 provides a ligand contact to ATP; the sequence is EISS. S426 serves as a coordination point for L-serine.

This sequence belongs to the class-II aminoacyl-tRNA synthetase family. Type-1 seryl-tRNA synthetase subfamily. As to quaternary structure, homodimer. The tRNA molecule binds across the dimer.

The protein localises to the cytoplasm. It carries out the reaction tRNA(Ser) + L-serine + ATP = L-seryl-tRNA(Ser) + AMP + diphosphate + H(+). It catalyses the reaction tRNA(Sec) + L-serine + ATP = L-seryl-tRNA(Sec) + AMP + diphosphate + H(+). Its pathway is aminoacyl-tRNA biosynthesis; selenocysteinyl-tRNA(Sec) biosynthesis; L-seryl-tRNA(Sec) from L-serine and tRNA(Sec): step 1/1. Functionally, catalyzes the attachment of serine to tRNA(Ser). Is also able to aminoacylate tRNA(Sec) with serine, to form the misacylated tRNA L-seryl-tRNA(Sec), which will be further converted into selenocysteinyl-tRNA(Sec). The sequence is that of Serine--tRNA ligase from Xanthobacter autotrophicus (strain ATCC BAA-1158 / Py2).